Reading from the N-terminus, the 100-residue chain is Large ribosomal subunit protein uL23 (100 aa).

Belongs to the universal ribosomal protein uL23 family. As to quaternary structure, part of the 50S ribosomal subunit. Contacts protein L29, and trigger factor when it is bound to the ribosome.

In terms of biological role, one of the early assembly proteins it binds 23S rRNA. One of the proteins that surrounds the polypeptide exit tunnel on the outside of the ribosome. Forms the main docking site for trigger factor binding to the ribosome. This chain is Large ribosomal subunit protein uL23, found in Shewanella frigidimarina (strain NCIMB 400).